The chain runs to 478 residues: Antiviral innate immune response effector IFIT1 (478 aa).

TPR repeat units lie at residues 52-85, 95-128, 139-174, 183-216, 218-249, and 251-284; these read VGIH…MQKE, LVTW…CKKP, PEID…DHEN, ISAY…NPDN, YLKV…NMSS, and TYVF…TPTS. Tryptophan 147 lines the mRNA pocket. Residue glycine 190 coordinates RNA. Lysine 259, histidine 289, glutamine 290, and lysine 336 together coordinate RNA. 4 TPR repeats span residues 305 to 339, 340 to 373, 378 to 412, and 437 to 470; these read ATKG…KPTF, EVAH…KPVV, QDIH…EQTS, and LESL…AADF.

This sequence belongs to the IFIT family. Component of an interferon-dependent multiprotein complex, at least composed of IFIT1, IFIT2 and IFIT3. Interacts (via TPR repeats 1-4) with RPL15. Interacts with STING1/MITA; could disrupt STING1 interaction with MAVS or TBK1, acting as a negative-feedback regulator of virus-triggered signaling. Interacts with EIF3E; this could be an alternative way to inhibit translation. In terms of processing, phosphorylated. Post-translationally, ISGylated.

Its subcellular location is the cytoplasm. Its function is as follows. Plays a key role in the innate immune response as part of an interferon-dependent multiprotein complex, recognizing and sequestering viral RNAs that lack host-specific 2'-O-methylation at their 5' cap. By distinguishing these RNAs from host mRNAs, inhibits their translation by competing with the translation initiation factor eIF4E. Could also prevent viral replication through its interaction with DNA replication origin-binding protein E1 of several viruses. Causes the translocation of E1 from the nucleus to the cytoplasm and can also inhibit its helicase activity in vitro. In Macaca fascicularis (Crab-eating macaque), this protein is Antiviral innate immune response effector IFIT1.